Reading from the N-terminus, the 282-residue chain is Stress response regulator protein 1 (282 aa).

Composition is skewed to low complexity over residues 12 to 30 and 41 to 58; these read NLSR…HSST and SLDT…SNNN. Disordered stretches follow at residues 12–31, 41–84, and 112–139; these read NLSR…SSTV, SLDT…DDED, and LTPF…TTVV. Over residues 66-77 the composition is skewed to polar residues; the sequence is SDYNSYTHNQYY. Positions 125–139 are enriched in low complexity; it reads SIISSKSSNKSTTVV. Residues 155-273 form the Response regulatory domain; sequence SFLIVDDNII…LDFMANSIDD (119 aa). Position 206 is a 4-aspartylphosphate (Asp-206).

Required for stress adaptation, morphogenesis and virulence. The protein is Stress response regulator protein 1 (SRR1) of Candida albicans (strain WO-1) (Yeast).